The following is a 667-amino-acid chain: YTH domain-containing protein ECT2 (667 aa).

Disordered stretches follow at residues 264-305 (QRPV…PSSV) and 379-398 (NELNRGPRAKGTKNQKGNLD). Residues 267–285 (VSGSGVASSYSKSSTVPSS) are compositionally biased toward low complexity. The span at 286 to 305 (RNQNYRSNSHYTSVHQPSSV) shows a compositional bias: polar residues. The 138-residue stretch at 442–579 (AMFFIIKSYS…EQGLKIVKIF (138 aa)) folds into the YTH domain. Residues 448-450 (KSY), D454, 464-465 (WA), N497, W521, W526, and W534 each bind RNA. Residues 606–667 (KAKQTQKQVS…VTGDVVANGC (62 aa)) form a disordered region. Positions 614 to 627 (VSEEKVTDEKKESA) are enriched in basic and acidic residues. Residues 628–639 (TAESASKESPAA) are compositionally biased toward low complexity.

In terms of assembly, interacts (via C-terminus) with CIPK1. As to expression, expressed in the shoot apex, at the sites of leaf formation, and in emerging leaves. Highly expressed in rapidly developing tissues.

The protein localises to the cytoplasm. Its subcellular location is the nucleus. Specifically recognizes and binds N6-methyladenosine (m6A)-containing RNAs, and regulates mRNA stability. M6A is a modification present at internal sites of mRNAs and some non-coding RNAs and plays a role in mRNA stability and processing. Binds preferentially in the 3'UTRs of target genes. May play dual roles in regulating 3'UTR processing in the nucleus and facilitating mRNA stability in the cytoplasm. Required for the correct timing of leaf formation and normal leaf morphology. Functions redundantly with ECT3. Required for proper trichome branching and morphology. Controls trichome morphology by binding transcripts related to trichome morphogenesis and affecting their stability. This is YTH domain-containing protein ECT2 from Arabidopsis thaliana (Mouse-ear cress).